The chain runs to 279 residues: Elongation factor Ts (279 aa).

Positions 80–83 (TDFV) are involved in Mg(2+) ion dislocation from EF-Tu.

It belongs to the EF-Ts family.

Its subcellular location is the cytoplasm. Its function is as follows. Associates with the EF-Tu.GDP complex and induces the exchange of GDP to GTP. It remains bound to the aminoacyl-tRNA.EF-Tu.GTP complex up to the GTP hydrolysis stage on the ribosome. In Borreliella burgdorferi (strain ATCC 35210 / DSM 4680 / CIP 102532 / B31) (Borrelia burgdorferi), this protein is Elongation factor Ts (tsf).